Here is a 200-residue protein sequence, read N- to C-terminus: Holliday junction resolvase RecU (200 aa).

4 residues coordinate Mg(2+): Thr-82, Asp-84, Glu-97, and Gln-116.

Belongs to the RecU family. Mg(2+) serves as cofactor.

It localises to the cytoplasm. It catalyses the reaction Endonucleolytic cleavage at a junction such as a reciprocal single-stranded crossover between two homologous DNA duplexes (Holliday junction).. Its function is as follows. Endonuclease that resolves Holliday junction intermediates in genetic recombination. Cleaves mobile four-strand junctions by introducing symmetrical nicks in paired strands. Promotes annealing of linear ssDNA with homologous dsDNA. Required for DNA repair, homologous recombination and chromosome segregation. This Streptococcus gordonii (strain Challis / ATCC 35105 / BCRC 15272 / CH1 / DL1 / V288) protein is Holliday junction resolvase RecU.